A 1145-amino-acid polypeptide reads, in one-letter code: DNA mismatch repair protein msh-3 (1145 aa).

Disordered regions lie at residues 1–183 and 857–879; these read MAGP…GAKT and SSSA…LAQL. A compositionally biased stretch (polar residues) spans 13–33; it reads ASISSFFTPRNTSPLVNLSQN. Residues 121–131 are compositionally biased toward basic and acidic residues; that stretch reads AERKKKEELHR. Residues 158–169 show a composition bias toward acidic residues; sequence GEGEEGEDDEEE. The interval 183–307 is mispair-binding domain; it reads TGKLTPMELQ…RKLTNVYTKG (125 aa). 882 to 889 contributes to the ATP binding site; that stretch reads GPNMGGKS. The disordered stretch occupies residues 1030–1056; the sequence is KSRTSMDDDAMEVDGDGDGQEGAGADK. Residues 1036–1048 show a composition bias toward acidic residues; sequence DDDAMEVDGDGDG.

Belongs to the DNA mismatch repair MutS family. MSH3 subfamily. As to quaternary structure, heterodimer consisting of msh-2-msh-3 (MutS beta). Forms a ternary complex with MutL alpha (mlh-1-pms-1).

It localises to the nucleus. Component of the post-replicative DNA mismatch repair system (MMR). Heterodimerizes with msh-2 to form MutS beta, which binds to DNA mismatches thereby initiating DNA repair. Msh-3 provides substrate-binding and substrate specificity to the complex. When bound, the MutS beta heterodimer bends the DNA helix and shields approximately 20 base pairs. Acts mainly to repair insertion-deletion loops (IDLs) from 2 to 13 nucleotides in size, but can also repair base-base and single insertion-deletion mismatches that occur during replication. After mismatch binding, forms a ternary complex with the MutL alpha heterodimer, which is thought to be responsible for directing the downstream MMR events, including strand discrimination, excision, and resynthesis. ATP binding and hydrolysis play a pivotal role in mismatch repair functions. The protein is DNA mismatch repair protein msh-3 (msh-3) of Neurospora crassa (strain ATCC 24698 / 74-OR23-1A / CBS 708.71 / DSM 1257 / FGSC 987).